Here is a 436-residue protein sequence, read N- to C-terminus: Phosphatidylinositol transfer protein CSR1 (436 aa).

The disordered stretch occupies residues 85–104 (VYDAEKVEDSDAEKEKPTPQ). Residues 86–102 (YDAEKVEDSDAEKEKPT) show a composition bias toward basic and acidic residues. Positions 188 to 347 (KKGIVKQLEL…ELGGKDEYNF (160 aa)) constitute a CRAL-TRIO domain.

The protein belongs to the PITP family. Binds phosphatidylinositol (PtdIns).

It is found in the cytoplasm. The protein localises to the endosome. Non-classical phosphatidylinositol (PtdIns) transfer protein (PITP), which exhibits PtdIns-binding/transfer activity in the absence of detectable PtdCho-binding/transfer activity. May also regulate post-Golgi membrane-trafficking events and have a role resistance to oxidative stress. The chain is Phosphatidylinositol transfer protein CSR1 (CSR1) from Eremothecium gossypii (strain ATCC 10895 / CBS 109.51 / FGSC 9923 / NRRL Y-1056) (Yeast).